Consider the following 212-residue polypeptide: MNIFRFAGDLSHVFAIIILLLKIWKTRSCAGISGKSQILFAVVYLTRYLDLFTTYVSLYNSVMKVLFLATSGATVYLMYVKFKATYDHNHDSFRIEFLLVPCALLSLVINHEFTVMEVLWTFSIYLESVAILPQLFLVSRTGEAESITSHYLFALGSYRALYLLNWVYRYMVESHYDLIAIFAGVVQTVLYCDFFYLYITKVLKGKKLQLPA.

Residues Met-1–Asn-2 are Lumenal-facing. Residues Ile-3–Leu-21 form a helical membrane-spanning segment. Residues Lys-22 to Lys-35 are Cytoplasmic-facing. The chain crosses the membrane as a helical span at residues Ser-36–Thr-53. Residues Thr-54–Ser-61 are Lumenal-facing. Residues Val-62 to Val-80 form a helical membrane-spanning segment. The Cytoplasmic portion of the chain corresponds to Lys-81–Glu-96. Residues Phe-97–Asn-110 form a helical membrane-spanning segment. At His-111–Glu-117 the chain is on the lumenal side. Residues Val-118–Leu-137 traverse the membrane as a helical segment. Topologically, residues Val-138–Ser-149 are cytoplasmic. Residues His-150–Tyr-168 form a helical membrane-spanning segment. At Arg-169–Leu-178 the chain is on the lumenal side. Residues Ile-179 to Ile-199 traverse the membrane as a helical segment. The Cytoplasmic segment spans residues Thr-200–Ala-212.

This sequence belongs to the ERD2 family.

The protein localises to the endoplasmic reticulum membrane. Functionally, required for the retention of luminal endoplasmic reticulum proteins. Determines the specificity of the luminal ER protein retention system. Also required for normal vesicular traffic through the Golgi. This Drosophila melanogaster (Fruit fly) protein is ER lumen protein-retaining receptor (KdelR).